Consider the following 1462-residue polypeptide: DNA polymerase alpha catalytic subunit (1462 aa).

Disordered regions lie at residues 1 to 33 and 98 to 123; these read MAPVHGDDSLSDSGSFVSSRARREKKSKKGRQE and DLEDDALDADEKGKDGKARNKDKRNV. Residues 20–29 are compositionally biased toward basic residues; the sequence is RARREKKSKK. Positions 106–116 are enriched in basic and acidic residues; the sequence is ADEKGKDGKAR. T174 is subject to Phosphothreonine. 3 positions are modified to phosphoserine: S186, S190, and S209. K224 carries the N6-acetyllysine modification. The segment at 232–251 is disordered; sequence DVQVESTEEEQESGAMEFED. Residue T406 is modified to Phosphothreonine. The tract at residues 650-715 is DNA-binding; the sequence is RINVCKAPHW…YHLSELVQQI (66 aa). K970 is subject to N6-succinyllysine. The segment at 1245–1376 is DNA-binding; that stretch reads QFRVHHYHKD…TGPLCPACMK (132 aa). Residues C1283, C1286, C1310, C1315, C1348, C1353, C1371, and C1374 each contribute to the Zn(2+) site. A CysA-type zinc finger spans residues 1283–1318; it reads CPTCGTENIYDNVFDGSGTDMEPSLYRCSNIDCKAS. Residues 1348-1374 carry the CysB motif motif; that stretch reads CEEPTCRNRTRHLPLQFSRTGPLCPAC.

This sequence belongs to the DNA polymerase type-B family. In terms of assembly, component of the alpha DNA polymerase complex (also known as the alpha DNA polymerase-primase complex) consisting of four subunits: the catalytic subunit POLA1, the regulatory subunit POLA2, and the primase complex subunits PRIM1 and PRIM2 respectively. Interacts with PARP1; this interaction functions as part of the control of replication fork progression. Interacts with MCM10 and WDHD1; these interactions recruit the polymerase alpha complex to the pre-replicative complex bound to DNA. Interacts with RPA1; this interaction stabilizes the replicative complex and reduces the misincorporation rate of DNA polymerase alpha by acting as a fidelity clamp. (Microbial infection) Interacts with SV40 Large T antigen; this interaction allows viral DNA replication. As to quaternary structure, (Microbial infection) Interacts with herpes simplex virus 1/HHV-1 replication origin-binding protein UL9. In terms of processing, a 165 kDa form is probably produced by proteolytic cleavage at Lys-124.

The protein resides in the nucleus. Its subcellular location is the cytoplasm. It is found in the cytosol. It carries out the reaction DNA(n) + a 2'-deoxyribonucleoside 5'-triphosphate = DNA(n+1) + diphosphate. Autoinhibited in apo-primosome, where the zinc motif of POLA1 and oligonucleotide/olicosaccharide-binding domain of POLA2 are placed into the active site blocking RNA:DNA duplex entry. Its function is as follows. Catalytic subunit of the DNA polymerase alpha complex (also known as the alpha DNA polymerase-primase complex) which plays an essential role in the initiation of DNA synthesis. During the S phase of the cell cycle, the DNA polymerase alpha complex (composed of a catalytic subunit POLA1, a regulatory subunit POLA2 and two primase subunits PRIM1 and PRIM2) is recruited to DNA at the replicative forks via direct interactions with MCM10 and WDHD1. The primase subunit of the polymerase alpha complex initiates DNA synthesis by oligomerising short RNA primers on both leading and lagging strands. These primers are initially extended by the polymerase alpha catalytic subunit and subsequently transferred to polymerase delta and polymerase epsilon for processive synthesis on the lagging and leading strand, respectively. The reason this transfer occurs is because the polymerase alpha has limited processivity and lacks intrinsic 3' exonuclease activity for proofreading error, and therefore is not well suited for replicating long complexes. In the cytosol, responsible for a substantial proportion of the physiological concentration of cytosolic RNA:DNA hybrids, which are necessary to prevent spontaneous activation of type I interferon responses. This is DNA polymerase alpha catalytic subunit (POLA1) from Homo sapiens (Human).